The sequence spans 378 residues: Probable selenide, water dikinase (378 aa).

Cysteine 33 is an active-site residue. Residues lysine 36, 63 to 65, aspartate 83, aspartate 106, and 158 to 160 each bind ATP; these read GLD and GQT. Aspartate 65 lines the Mg(2+) pocket. Residue aspartate 106 coordinates Mg(2+). Aspartate 260 serves as a coordination point for Mg(2+).

Belongs to the selenophosphate synthase 1 family. Class I subfamily. As to quaternary structure, homodimer. Requires Mg(2+) as cofactor.

It carries out the reaction hydrogenselenide + ATP + H2O = selenophosphate + AMP + phosphate + 2 H(+). Functionally, synthesizes selenophosphate from selenide and ATP. In Caenorhabditis elegans, this protein is Probable selenide, water dikinase (seld-1).